Here is a 490-residue protein sequence, read N- to C-terminus: MAIILCFLILLPLILIFLKKLKHSKWKLPPGPPKLPFIGNLHQLQELPPRNLNHKYGPVILLRFGFVPLVVISSKEAAEEVLKIHDLECCSRPETAGTRKISYNFKDIGFAPYGEEWKAMRKLSVVELFTAKKHQYFRSIREEENDLLVKKLTELALTRSPVNLKKTLFTLVGSIVCRIGFGFNLHECEFIDENSISDLVDKSEILEMTSMFSDFFPGGIGRFIDWISGQNKRFDNVFSDLDTFFQNILDYHLKPGRKVADSSDIIDVVINMIKKQEKDGDSFKLTTDHLKGMISDIFLAGVSTSASTLIWAITELVRNRKVMKKVQEEIRTTLGDKKERITEQDLTNLHYFKLVVKEIFRLHPAVPFLLPRETLSHVKIQGYDIPAKTQIMINVYAIARDPKLWTNPDEFNPDRFLDSSIDYKGLNFELLPFGSGRRICPGMTMGITLVEFALLNLLYFFDWGLPEKEEADKIITGNGVAVGLVQVLLH.

Residues 1-21 (MAIILCFLILLPLILIFLKKL) form a helical membrane-spanning segment. A heme-binding site is contributed by Cys440.

The protein belongs to the cytochrome P450 family. Heme is required as a cofactor.

Its subcellular location is the membrane. The sequence is that of Cytochrome P450 71B29 (CYP71B29) from Arabidopsis thaliana (Mouse-ear cress).